Reading from the N-terminus, the 258-residue chain is Eukaryotic translation initiation factor 3 subunit J (258 aa).

The span at 1–11 (MAAAAAAAGDS) shows a compositional bias: low complexity. The segment at 1–108 (MAAAAAAAGD…LEEPEEPKVL (108 aa)) is disordered. Alanine 2 bears the N-acetylalanine mark. A sufficient for interaction with EIF3B region spans residues 2–69 (AAAAAAAGDS…KEEAEVKPEV (68 aa)). A phosphoserine mark is found at serine 11, serine 13, and serine 20. Positions 40 to 59 (EGEDEDEDVKDNWDDDDDEK) are enriched in acidic residues. Basic and acidic residues predominate over residues 60–106 (KEEAEVKPEVKISEKKKIAEKIKEKERQQKKRQEEIKKRLEEPEEPK). The stretch at 70 to 135 (KISEKKKIAE…ESDLELAKET (66 aa)) forms a coiled coil. Lysine 106 is covalently cross-linked (Glycyl lysine isopeptide (Lys-Gly) (interchain with G-Cter in SUMO2)). Phosphothreonine is present on threonine 109. Serine 127 carries the phosphoserine modification. The disordered stretch occupies residues 217–238 (SKAKKKKKGVVPGGGLKATMKD). The segment at 243–258 (YGGYDGGYVQDYEDFM) is promotes stable association with the 40S ribosome. Tyrosine 254 bears the Phosphotyrosine mark.

In terms of assembly, component of the eukaryotic translation initiation factor 3 (eIF-3) complex, which is composed of 13 subunits: EIF3A, EIF3B, EIF3C, EIF3D, EIF3E, EIF3F, EIF3G, EIF3H, EIF3I, EIF3J, EIF3K, EIF3L and EIF3M. The eIF-3 complex appears to include 3 stable modules: module A is composed of EIF3A, EIF3B, EIF3G and EIF3I; module B is composed of EIF3F, EIF3H, and EIF3M; and module C is composed of EIF3C, EIF3D, EIF3E, EIF3K and EIF3L. EIF3C of module C binds EIF3B of module A and EIF3H of module B, thereby linking the three modules. EIF3J is a labile subunit that binds to the eIF-3 complex via EIF3B. The eIF-3 complex interacts with RPS6KB1 under conditions of nutrient depletion. Mitogenic stimulation leads to binding and activation of a complex composed of MTOR and RPTOR, leading to phosphorylation and release of RPS6KB1 and binding of EIF4B to eIF-3. In terms of processing, phosphorylated. Phosphorylation is enhanced upon serum stimulation.

It is found in the cytoplasm. In terms of biological role, component of the eukaryotic translation initiation factor 3 (eIF-3) complex, which is required for several steps in the initiation of protein synthesis. The eIF-3 complex associates with the 40S ribosome and facilitates the recruitment of eIF-1, eIF-1A, eIF-2:GTP:methionyl-tRNAi and eIF-5 to form the 43S pre-initiation complex (43S PIC). The eIF-3 complex stimulates mRNA recruitment to the 43S PIC and scanning of the mRNA for AUG recognition. The eIF-3 complex is also required for disassembly and recycling of post-termination ribosomal complexes and subsequently prevents premature joining of the 40S and 60S ribosomal subunits prior to initiation. The eIF-3 complex specifically targets and initiates translation of a subset of mRNAs involved in cell proliferation, including cell cycling, differentiation and apoptosis, and uses different modes of RNA stem-loop binding to exert either translational activation or repression. The polypeptide is Eukaryotic translation initiation factor 3 subunit J (Homo sapiens (Human)).